Reading from the N-terminus, the 506-residue chain is Dipeptide and tripeptide permease A (506 aa).

Topologically, residues 1–36 are cytoplasmic; it reads MSTANNNSEHPESVSLNAFKQPKAFYLIFSIELWER. A helical transmembrane segment spans residues 37 to 57; sequence FGYYGLQGIMAVYLVKMLGLS. Residues 58-61 lie on the Periplasmic side of the membrane; that stretch reads EADS. Residues 62-82 traverse the membrane as a helical segment; sequence ITLFSSFSALVYGFVAIGGWL. The Cytoplasmic portion of the chain corresponds to 83 to 91; it reads GDKVLGSKR. Helical transmembrane passes span 92 to 112 and 113 to 133; these read VIVL…YSGH and EIFW…LFKA. Residues 134-155 are Cytoplasmic-facing; that stretch reads NPSSLLSTCYEKDDPRLDGAFT. Residues 156–176 form a helical membrane-spanning segment; sequence MYYMSVNIGSFLSMLATPWLA. Residues 177 to 180 are Periplasmic-facing; it reads AKYG. A helical transmembrane segment spans residues 181–201; that stretch reads WSVAFSLSVVGMLITLVNFMV. At 202–222 the chain is on the cytoplasmic side; it reads CHKWVKQHGSKPDFKPLQVKK. The helical transmembrane segment at 223 to 243 threads the bilayer; the sequence is LLMVLVGVVALVALSSWLLHN. Residues 244–248 are Periplasmic-facing; that stretch reads QIIAR. Residues 249–269 form a helical membrane-spanning segment; that stretch reads WALAIVSIGIVIVFAKETFAL. Topologically, residues 270-276 are cytoplasmic; that stretch reads HGAARRK. Residues 277 to 297 traverse the membrane as a helical segment; the sequence is MIVAFLLMLEAVVFFVLYSQM. Over 298-322 the chain is Periplasmic; that stretch reads PTSLNFFAIHNVEHNILGLAFEPEQ. Residues 323–343 form a helical membrane-spanning segment; that stretch reads YQALNPFWIMLASPILAALYN. Topologically, residues 344–354 are cytoplasmic; the sequence is KMGDRLPMPHK. Residues 355 to 375 form a helical membrane-spanning segment; sequence FAFGMILCSGAFLVLPWGASF. Over 376 to 385 the chain is Periplasmic; it reads ANEQGIVSVN. The helical transmembrane segment at 386–406 threads the bilayer; it reads WLILSYALQSIGELMISGLGL. Residues 407-416 are Cytoplasmic-facing; it reads AMVAQLVPQR. The chain crosses the membrane as a helical span at residues 417-437; the sequence is LMGFIMGSWFLTTAAAALIAG. Residues 438 to 461 lie on the Periplasmic side of the membrane; sequence KVAGLTAVPGDVNDAHASLAIYSH. A helical transmembrane segment spans residues 462–482; that stretch reads VFMQIGIATAVIAILMMLTAP. Residues 483 to 506 lie on the Cytoplasmic side of the membrane; the sequence is KLHRMTLDTAEDTEKKAQAAAITN.

Belongs to the major facilitator superfamily. Proton-dependent oligopeptide transporter (POT/PTR) (TC 2.A.17) family. DtpA subfamily.

The protein localises to the cell inner membrane. Proton-dependent permease that transports di- and tripeptides. The polypeptide is Dipeptide and tripeptide permease A (Serratia proteamaculans (strain 568)).